The following is a 550-amino-acid chain: Envelope glycoprotein E (550 aa).

The first 23 residues, 1–23 (MELLAASRACIFFGLVTVLDAWG), serve as a signal peptide directing secretion. Over 24–408 (VQQVELSEGA…GAWTRHYLAF (385 aa)) the chain is Virion surface. Residue Asn-47 is glycosylated (N-linked (GlcNAc...) asparagine; by host). The interaction with gI stretch occupies residues 65–91 (CAGDISVKKVCVSHSLCEDNIIIGKHC). Asn-109, Asn-122, and Asn-241 each carry an N-linked (GlcNAc...) asparagine; by host glycan. Cystine bridges form between Cys-247/Cys-273 and Cys-256/Cys-265. The N-linked (GlcNAc...) asparagine; by host glycan is linked to Asn-291. The cysteines at positions 292 and 303 are disulfide-linked. The chain crosses the membrane as a helical span at residues 409–425 (LLVIICTCAALLVALVV). Topologically, residues 426–550 (WGCILYIRSN…VASKLKSILK (125 aa)) are intravirion. Positions 449–452 (YTSV) match the Internalization motif motif. The acidic stretch occupies residues 468–482 (ASDSDDSFDSDSDEE). Positions 471 to 484 (SDDSFDSDSDEELE) are enriched in acidic residues. Residues 471 to 513 (SDDSFDSDSDEELEYPPPPKPAPQLPPYQFVDGGDAPSGRSGF) are disordered. The segment covering 485–496 (YPPPPKPAPQLP) has biased composition (pro residues).

The protein belongs to the alphaherpesvirinae glycoprotein E family. In terms of assembly, interacts with gI. Post-translationally, phosphorylated on serines within the acidic cluster. Phosphorylation determines whether endocytosed viral gE traffics to the trans-Golgi network or recycles to the cell membrane.

The protein resides in the virion membrane. It is found in the host cell membrane. It localises to the host cell junction. Its subcellular location is the host Golgi apparatus membrane. The protein localises to the host endosome membrane. Its function is as follows. In epithelial cells, the heterodimer gE/gI is required for the cell-to-cell spread of the virus, by sorting nascent virions to cell junctions. Once the virus reaches the cell junctions, virus particles can spread to adjacent cells extremely rapidly through interactions with cellular receptors that accumulate at these junctions. Implicated in basolateral spread in polarized cells. In neuronal cells, gE/gI is essential for the anterograde spread of the infection throughout the host nervous system. Together with US9, the heterodimer gE/gI is involved in the sorting and transport of viral structural components toward axon tips. This is Envelope glycoprotein E (gE) from Equus caballus (Horse).